A 143-amino-acid chain; its full sequence is Small ribosomal subunit protein uS12 (143 aa).

P62 carries the hydroxyproline modification.

It belongs to the universal ribosomal protein uS12 family. As to quaternary structure, component of the 40S small ribosomal subunit.

The protein localises to the cytoplasm. It is found in the cytosol. Its subcellular location is the rough endoplasmic reticulum. This Ciona intestinalis (Transparent sea squirt) protein is Small ribosomal subunit protein uS12 (RPS23).